An 883-amino-acid chain; its full sequence is 3-hydroxy-3-methylglutaryl-coenzyme A reductase (883 aa).

The Cytoplasmic portion of the chain corresponds to 1–9 (MLSRLFRMH). The chain crosses the membrane as a helical span at residues 10 to 39 (GQFVASHPWEVIVGTVTLTICMMSMNMFTG). Over 40–56 (NDKICGWNYACPKFEED) the chain is Lumenal. A helical transmembrane segment spans residues 57–78 (VLSSDIIILTITRCIAILYIYF). Over 79–89 (QFQNLRQLGSK) the chain is Cytoplasmic. Residues 90–114 (YILGIAGLFTIFSSFVFSTVVIHFL) traverse the membrane as a helical segment. Over 115–123 (DKELTGLNE) the chain is Lumenal. A helical transmembrane segment spans residues 124–149 (ALPFFLLLIDLSKASALAKFALSSNS). Residues 150–159 (QDEVRDNIAR) lie on the Cytoplasmic side of the membrane. The helical transmembrane segment at 160–187 (GMAILGPTFTLEALVECLVIGVGTMSGV) threads the bilayer. Residues 188 to 191 (RQLE) lie on the Lumenal side of the membrane. A helical membrane pass occupies residues 192 to 220 (IMCCFGCMSVLANYFAFMTFFPACVSLVL). At 221-249 (ELSRESREGRPIWQLSQFASVLEEEEDNK) the chain is on the cytoplasmic side. Residues 250–276 (PNPVTQRVKMIMSLGLVLVHAHSRWIS) traverse the membrane as a helical segment. Residues 277–316 (EPSSQNSTSISDHEVTTMLDDMMPKRVEPSMPLWQFYLSR) are Lumenal-facing. Residue N282 is glycosylated (N-linked (GlcNAc...) asparagine). A helical transmembrane segment spans residues 317 to 341 (MVTMDVEQIITLGLALLLAVKYIFF). Residues 342–883 (EQTETESTFS…LPGTCTKKAA (542 aa)) lie on the Cytoplasmic side of the membrane. Positions 373–396 (REPEQEKTVHVSTTEEASSKEETE) are disordered. Catalysis depends on charge relay system residues E554, K686, and D762. H861 acts as the Proton donor in catalysis.

The protein belongs to the HMG-CoA reductase family. As to quaternary structure, homotetramer. Homodimer.

It is found in the endoplasmic reticulum membrane. The protein localises to the peroxisome membrane. It catalyses the reaction (R)-mevalonate + 2 NADP(+) + CoA = (3S)-3-hydroxy-3-methylglutaryl-CoA + 2 NADPH + 2 H(+). Its pathway is metabolic intermediate biosynthesis; (R)-mevalonate biosynthesis; (R)-mevalonate from acetyl-CoA: step 3/3. Functionally, catalyzes the conversion of (3S)-hydroxy-3-methylglutaryl-CoA (HMG-CoA) to mevalonic acid, the rate-limiting step in the synthesis of cholesterol and other isoprenoids, thus plays a critical role in cellular cholesterol homeostasis. This Xenopus laevis (African clawed frog) protein is 3-hydroxy-3-methylglutaryl-coenzyme A reductase (hmgcr).